Consider the following 441-residue polypeptide: MTNFCIKSYLFLYLSFLLFFDIITIFHVSSIRISTVLKNDKKKKNFNTSLVEENKKYLFNEIKLNNRFKNDIKGYIQNINNFHSIIESKIPNSLLYVHEDLINFHNSQFIGDIEIGNPPQSFKVVFDTGSSNFAIPSTKCVKGGCTLHNKFDAKKSRTFMSNLKNKKESIYTYVQYGTGKSILEHGYDDVYMKGLKINKQCIGLIIEESMHPFSDLPFDGIVGLGFSDPDNSFQTKYSKSLIETIKEQNLLQQNIFSFYVPKELEKSGAITFGRANSKYAIEGEKIEWFPVISMYFWEINLLGILLPDKNFEICSNKKCRAAVDTGSSLITGPSSLMQPLIENINLEKDCSNISSLPIISFVLKNVEGKTVILDFTPDDYILQENSEEDNSSQCVIGLMSLDIPPPRGPIFIFGNVFIRKYYTIFDNDHKLVGVVKSNHNF.

Residues 1–7 are Cytoplasmic-facing; that stretch reads MTNFCIK. The helical; Signal-anchor for type II membrane protein transmembrane segment at 8–28 threads the bilayer; sequence SYLFLYLSFLLFFDIITIFHV. The Extracellular segment spans residues 29 to 441; it reads SSIRISTVLK…VGVVKSNHNF (413 aa). One can recognise a Peptidase A1 domain in the interval 109-435; sequence FIGDIEIGNP…DNDHKLVGVV (327 aa). Active-site residues include aspartate 127 and aspartate 324.

The protein belongs to the peptidase A1 family.

It is found in the membrane. In terms of biological role, during the development in the mosquito midgut, plays a role in sporozoite egress from oocysts. This is Plasmepsin VI from Plasmodium berghei (strain Anka).